A 507-amino-acid chain; its full sequence is MEEFKRYLELHRFQQHDFIYPLIFQEYIYALAHGRGLNGSIFFENAGYDNKSSLLIVKRLITHLITQMYQQNHFLFYTNDFNPNKFLGCNTNLYSQMIFEGFAVVVEIPFYLRLLSFLEGKERVKSHNLRSLHSIFPFLEDKFSHLNSLLDILIPHPVHLEILVQTLRYWVKDPSSLHLLRFFLHEYPNWNSLMTPKKSSFSFSKRNQRFFFFLYNFYVCEYESIFVFLRNQSSHLCSTSSETLSERICFYKKIELEEVFTKDFKAILWVFKDPFLHYVRYRGKSILASKDSSLLMNKWKYYLVNIWECYFYIWSQPRRIHINQLSNNSLDFLGYLLSVRLKPSMVRSQMIENSFLIENAIKQFDIIVPITPLVTSLSKAKFCNVLGHPYSKPSWAESSDSDIIERFGRIYRNLSHYHSGSLKKISLYRIKYILRLSCARTLARKHKSTVRSFLKRLGVGLLEEFFTEEEQVFYLTFPRASSTSGKLYQRRIWYLDIFCINDPANHE.

Belongs to the intron maturase 2 family. MatK subfamily.

It localises to the plastid. Its subcellular location is the chloroplast. Usually encoded in the trnK tRNA gene intron. Probably assists in splicing its own and other chloroplast group II introns. The sequence is that of Maturase K from Lyonia ferruginea (Rusty staggerbush).